Consider the following 557-residue polypeptide: Dihydroxy-acid dehydratase (557 aa).

A Mg(2+)-binding site is contributed by aspartate 78. Cysteine 119 provides a ligand contact to [2Fe-2S] cluster. Aspartate 120 and lysine 121 together coordinate Mg(2+). Position 121 is an N6-carboxylysine (lysine 121). Cysteine 191 serves as a coordination point for [2Fe-2S] cluster. Position 442 (glutamate 442) interacts with Mg(2+). Residue serine 468 is the Proton acceptor of the active site.

This sequence belongs to the IlvD/Edd family. Homodimer. [2Fe-2S] cluster serves as cofactor. It depends on Mg(2+) as a cofactor.

The catalysed reaction is (2R)-2,3-dihydroxy-3-methylbutanoate = 3-methyl-2-oxobutanoate + H2O. It catalyses the reaction (2R,3R)-2,3-dihydroxy-3-methylpentanoate = (S)-3-methyl-2-oxopentanoate + H2O. The protein operates within amino-acid biosynthesis; L-isoleucine biosynthesis; L-isoleucine from 2-oxobutanoate: step 3/4. It participates in amino-acid biosynthesis; L-valine biosynthesis; L-valine from pyruvate: step 3/4. In terms of biological role, functions in the biosynthesis of branched-chain amino acids. Catalyzes the dehydration of (2R,3R)-2,3-dihydroxy-3-methylpentanoate (2,3-dihydroxy-3-methylvalerate) into 2-oxo-3-methylpentanoate (2-oxo-3-methylvalerate) and of (2R)-2,3-dihydroxy-3-methylbutanoate (2,3-dihydroxyisovalerate) into 2-oxo-3-methylbutanoate (2-oxoisovalerate), the penultimate precursor to L-isoleucine and L-valine, respectively. The sequence is that of Dihydroxy-acid dehydratase from Lachnospira eligens (strain ATCC 27750 / DSM 3376 / VPI C15-48 / C15-B4) (Eubacterium eligens).